The following is a 261-amino-acid chain: Hemin import ATP-binding protein HmuV (261 aa).

The ABC transporter domain maps to 3–243; the sequence is LQAQDLSVDR…ANLRRVYGVE (241 aa). Residue 35-42 coordinates ATP; that stretch reads GANGAGKS.

The protein belongs to the ABC transporter superfamily. Heme (hemin) importer (TC 3.A.1.14.5) family. As to quaternary structure, the complex is composed of two ATP-binding proteins (HmuV), two transmembrane proteins (HmuU) and a solute-binding protein (HmuT).

It localises to the cell inner membrane. Functionally, part of the ABC transporter complex HmuTUV involved in hemin import. Responsible for energy coupling to the transport system. The sequence is that of Hemin import ATP-binding protein HmuV from Bordetella avium (strain 197N).